The primary structure comprises 280 residues: DegV domain-containing protein Mb2440c (280 aa).

A DegV domain is found at 3–274 (VVVVTDTSCR…AGAVGVCVDV (272 aa)). A hexadecanoate-binding site is contributed by S89.

In terms of biological role, may bind long-chain fatty acids, such as palmitate, and may play a role in lipid transport or fatty acid metabolism. This chain is DegV domain-containing protein Mb2440c, found in Mycobacterium bovis (strain ATCC BAA-935 / AF2122/97).